The following is a 310-amino-acid chain: Basic salivary proline-rich protein 4 (310 aa).

Positions 1–16 (MLLILLSVALLALSSA) are cleaved as a signal peptide. The disordered stretch occupies residues 14–310 (SSAESSSEDV…RPAQGQQPPQ (297 aa)). 9 repeat units span residues 35 to 55 (KPEG…PPPG), 56 to 76 (KPQG…PPPG), 77 to 97 (KPEG…PHPG), 98 to 118 (KPER…PHPG), 119 to 139 (KPES…PTPG), 140 to 160 (KPEG…PPPG), 161 to 181 (KPEG…PHPG), 182 to 202 (KPER…PPPG), and 203 to 223 (KPER…PHPG). Positions 35–234 (KPEGRRPQGG…PEGPPPQEGN (200 aa)) are 9.5 X 21 AA tandem repeats of K-P-[EQ]-[GR]-[PR]-[PR]-P-Q-G-G-N-Q-[PS]-[QH]-[RG]-[PT]-P-P-[PH]-P-G. The span at 48–63 (QRPPPPPGKPQGPPPQ) shows a compositional bias: pro residues. N-linked (GlcNAc...) asparagine glycosylation is found at asparagine 66, asparagine 87, and asparagine 108. A compositionally biased stretch (pro residues) spans 133–147 (GPPPTPGKPEGPPPQ). N-linked (GlcNAc...) asparagine glycosylation is found at asparagine 150, asparagine 171, and asparagine 192. Residues 196 to 210 (RPPPPPGKPERPPPQ) are compositionally biased toward pro residues. Asparagine 213 carries an N-linked (GlcNAc...) asparagine glycan. Positions 217-231 (GPPPHPGKPEGPPPQ) are enriched in pro residues. Residues 224-234 (KPEGPPPQEGN) form a 10; truncated repeat. A glycan (N-linked (GlcNAc...) asparagine) is linked at asparagine 234. Residues 258 to 310 (QGPPPPGKPQGPPPAGGNPQQPQAPPAGKPQGPPPPPQGGRPPRPAQGQQPPQ) are compositionally biased toward pro residues.

N-glycosylated. Post-translationally, proteolytically cleaved at the tripeptide Xaa-Pro-Gln, where Xaa in the P(3) position is mostly lysine. The endoprotease may be of microbial origin. Pyroglutamate formation found on at least Gln-46, Gln-48, Gln-67, Gln-88; Gln-90; Gln-193; Gln-288 Gln-214 and Gln-295, preferentially in diabetic, and head and neck cancer patients.

The protein resides in the secreted. The protein is Basic salivary proline-rich protein 4 (PRB4) of Homo sapiens (Human).